Here is a 1058-residue protein sequence, read N- to C-terminus: Carbamoyl phosphate synthase large chain (1058 aa).

Positions Met1–Glu401 are carboxyphosphate synthetic domain. Positions 129, 169, 175, 176, 208, 210, 215, 241, 242, 243, 284, and 298 each coordinate ATP. Residues Lys133–Val327 form the ATP-grasp 1 domain. Residues Gln284, Glu298, and Asn300 each contribute to the Mg(2+) site. Mn(2+) is bound by residues Gln284, Glu298, and Asn300. Residues Ile402–Ser546 are oligomerization domain. A carbamoyl phosphate synthetic domain region spans residues Ile547–Tyr929. One can recognise an ATP-grasp 2 domain in the interval Glu671–Leu861. ATP is bound by residues Arg707, Ser746, Ile748, Glu752, Gly777, Val778, His779, Ser780, Gln820, and Glu832. Mg(2+) contacts are provided by Gln820, Glu832, and Asn834. The Mn(2+) site is built by Gln820, Glu832, and Asn834. The region spanning Leu930 to Ile1058 is the MGS-like domain. Residues Leu930–Ile1058 are allosteric domain.

This sequence belongs to the CarB family. Composed of two chains; the small (or glutamine) chain promotes the hydrolysis of glutamine to ammonia, which is used by the large (or ammonia) chain to synthesize carbamoyl phosphate. Tetramer of heterodimers (alpha,beta)4. Requires Mg(2+) as cofactor. Mn(2+) is required as a cofactor.

The catalysed reaction is hydrogencarbonate + L-glutamine + 2 ATP + H2O = carbamoyl phosphate + L-glutamate + 2 ADP + phosphate + 2 H(+). It catalyses the reaction hydrogencarbonate + NH4(+) + 2 ATP = carbamoyl phosphate + 2 ADP + phosphate + 2 H(+). The protein operates within amino-acid biosynthesis; L-arginine biosynthesis; carbamoyl phosphate from bicarbonate: step 1/1. It participates in pyrimidine metabolism; UMP biosynthesis via de novo pathway; (S)-dihydroorotate from bicarbonate: step 1/3. Functionally, large subunit of the glutamine-dependent carbamoyl phosphate synthetase (CPSase). CPSase catalyzes the formation of carbamoyl phosphate from the ammonia moiety of glutamine, carbonate, and phosphate donated by ATP, constituting the first step of 2 biosynthetic pathways, one leading to arginine and/or urea and the other to pyrimidine nucleotides. The large subunit (synthetase) binds the substrates ammonia (free or transferred from glutamine from the small subunit), hydrogencarbonate and ATP and carries out an ATP-coupled ligase reaction, activating hydrogencarbonate by forming carboxy phosphate which reacts with ammonia to form carbamoyl phosphate. The protein is Carbamoyl phosphate synthase large chain of Streptococcus pneumoniae serotype 2 (strain D39 / NCTC 7466).